The chain runs to 305 residues: Glycine--tRNA ligase alpha subunit (305 aa).

It belongs to the class-II aminoacyl-tRNA synthetase family. As to quaternary structure, tetramer of two alpha and two beta subunits.

It is found in the cytoplasm. It catalyses the reaction tRNA(Gly) + glycine + ATP = glycyl-tRNA(Gly) + AMP + diphosphate. The polypeptide is Glycine--tRNA ligase alpha subunit (Streptococcus pneumoniae (strain ATCC 700669 / Spain 23F-1)).